A 636-amino-acid polypeptide reads, in one-letter code: Rik1-associated factor 2 (636 aa).

As to quaternary structure, component of the Clr4 methyltransferase complex (ClrC) composed of at least clr4, rik1, pcu4, rbx1, raf1 and raf2. The cullin pcu4, rik1, raf1, raf2 and the ring-box protein rbx1 are components of an E3 ubiquitin ligase, whose activity is essential for heterochromatin assembly. Interacts with pcu4.

It localises to the cytoplasm. It is found in the mitochondrion. Its subcellular location is the nucleus. The protein localises to the chromosome. Component of the Clr4 methyltransferase complex (ClrC) which contributes to the establishment of heterochromatin by specifically methylating histone H3 to form H3K9me. ClrC preferentially ubiquitylates H3K14 and ClrC-mediated H3 ubiquitination promotes clr4 methyltransferase activity for the methylation of H3K9. H3K9me represents a specific tag for epigenetic transcriptional repression by recruiting swi6/HP1 to methylated histones which leads to transcriptional silencing within centromeric heterochromatin, telomeric regions and at the silent mating-type loci. Has a role in both mitotic and meiotic chromosome segregation. The protein is Rik1-associated factor 2 (raf2) of Schizosaccharomyces pombe (strain 972 / ATCC 24843) (Fission yeast).